Here is a 490-residue protein sequence, read N- to C-terminus: Cytochrome P450 2C13, male-specific (490 aa).

Cys435 contributes to the heme binding site.

Belongs to the cytochrome P450 family. Heme is required as a cofactor. In terms of tissue distribution, liver, and to a lesser extent in prostate, kidney, heart and brain.

The protein resides in the endoplasmic reticulum membrane. It is found in the microsome membrane. It carries out the reaction an organic molecule + reduced [NADPH--hemoprotein reductase] + O2 = an alcohol + oxidized [NADPH--hemoprotein reductase] + H2O + H(+). Functionally, cytochromes P450 are a group of heme-thiolate monooxygenases. In liver microsomes, this enzyme is involved in an NADPH-dependent electron transport pathway. It oxidizes a variety of structurally unrelated compounds, including steroids, fatty acids, and xenobiotics. The polypeptide is Cytochrome P450 2C13, male-specific (Cyp2c13) (Rattus norvegicus (Rat)).